A 32-amino-acid polypeptide reads, in one-letter code: MSDIN-like toxin proprotein a (32 aa).

The propeptide occupies 1 to 10 (MSDINATRLP). Positions 11–18 (IIGILLPP) form a cross-link, cyclopeptide (Ile-Pro). A propeptide spanning residues 19-32 (CIGDDVTLLLTRGE) is cleaved from the precursor.

It belongs to the MSDIN fungal toxin family. Processed by the macrocyclase-peptidase enzyme POPB to yield a toxic cyclic octapeptide. POPB first removes 10 residues from the N-terminus. Conformational trapping of the remaining peptide forces the enzyme to release this intermediate rather than proceed to macrocyclization. The enzyme rebinds the remaining peptide in a different conformation and catalyzes macrocyclization of the N-terminal 8 residues.

Probable toxin that belongs to the MSDIN-like toxin family responsible for a large number of food poisoning cases and deaths. This is MSDIN-like toxin proprotein a from Amanita phalloides (Death cap).